We begin with the raw amino-acid sequence, 422 residues long: Enolase (422 aa).

Q162 serves as a coordination point for (2R)-2-phosphoglycerate. The Proton donor role is filled by E204. Positions 241, 284, and 311 each coordinate Mg(2+). Positions 336, 365, 366, and 387 each coordinate (2R)-2-phosphoglycerate. The active-site Proton acceptor is the K336.

Belongs to the enolase family. Component of the RNA degradosome, a multiprotein complex involved in RNA processing and mRNA degradation. Requires Mg(2+) as cofactor.

It localises to the cytoplasm. Its subcellular location is the secreted. The protein localises to the cell surface. It carries out the reaction (2R)-2-phosphoglycerate = phosphoenolpyruvate + H2O. It participates in carbohydrate degradation; glycolysis; pyruvate from D-glyceraldehyde 3-phosphate: step 4/5. Catalyzes the reversible conversion of 2-phosphoglycerate (2-PG) into phosphoenolpyruvate (PEP). It is essential for the degradation of carbohydrates via glycolysis. The protein is Enolase of Legionella pneumophila (strain Corby).